A 104-amino-acid chain; its full sequence is Cell division topological specificity factor (104 aa).

This sequence belongs to the MinE family.

Functionally, prevents the cell division inhibition by proteins MinC and MinD at internal division sites while permitting inhibition at polar sites. This ensures cell division at the proper site by restricting the formation of a division septum at the midpoint of the long axis of the cell. This chain is Cell division topological specificity factor, found in Sorangium cellulosum (strain So ce56) (Polyangium cellulosum (strain So ce56)).